A 479-amino-acid polypeptide reads, in one-letter code: Ribulose bisphosphate carboxylase large chain (479 aa).

The propeptide occupies 1 to 2 (MS). Substrate contacts are provided by Asn123 and Thr173. The Proton acceptor role is filled by Lys175. Lys177 lines the substrate pocket. Mg(2+) contacts are provided by Lys201, Asp203, and Glu204. N6-carboxylysine is present on Lys201. Ser208 is subject to Phosphoserine. The active-site Proton acceptor is His294. Positions 295 and 327 each coordinate substrate. Thr330 bears the Phosphothreonine mark. Ser379 is a binding site for substrate.

The protein belongs to the RuBisCO large chain family. Type I subfamily. In terms of assembly, heterohexadecamer of 8 large chains and 8 small chains; disulfide-linked. The disulfide link is formed within the large subunit homodimers. Mg(2+) serves as cofactor. In terms of processing, the disulfide bond which can form in the large chain dimeric partners within the hexadecamer appears to be associated with oxidative stress and protein turnover.

The protein resides in the plastid. It is found in the chloroplast. The enzyme catalyses 2 (2R)-3-phosphoglycerate + 2 H(+) = D-ribulose 1,5-bisphosphate + CO2 + H2O. The catalysed reaction is D-ribulose 1,5-bisphosphate + O2 = 2-phosphoglycolate + (2R)-3-phosphoglycerate + 2 H(+). In terms of biological role, ruBisCO catalyzes two reactions: the carboxylation of D-ribulose 1,5-bisphosphate, the primary event in carbon dioxide fixation, as well as the oxidative fragmentation of the pentose substrate in the photorespiration process. Both reactions occur simultaneously and in competition at the same active site. This chain is Ribulose bisphosphate carboxylase large chain, found in Capsella bursa-pastoris (Shepherd's purse).